The following is a 177-amino-acid chain: Zinc metalloproteinase-disintegrin-like scutiarin (177 aa).

Positions 1–63 constitute a Disintegrin domain; the sequence is NPCCDAATCK…ECPADVFHKN (63 aa). 10 disulfides stabilise this stretch: C3–C26, C17–C23, C22–C48, C35–C55, C42–C74, C67–C79, C86–C136, C101–C147, C114–C124, and C131–C173. The D/ECD-tripeptide signature appears at 41–43; it reads ECD. D43, P44, E46, D58, and V59 together coordinate Ca(2+).

Belongs to the venom metalloproteinase (M12B) family. P-III subfamily. P-IIIa sub-subfamily. In terms of assembly, monomer. Zn(2+) is required as a cofactor. Glycosylated. As to expression, expressed by the venom gland.

Its subcellular location is the secreted. Functionally, snake venom metalloproteinase that impairs hemostasis in the envenomed animal. This is Zinc metalloproteinase-disintegrin-like scutiarin from Crotalus scutulatus scutulatus (Mojave rattlesnake).